The primary structure comprises 941 residues: Pre-mRNA-processing factor 6 (941 aa).

Residues 1-79 (MNKKKKPFLG…DEDLNDTNYD (79 aa)) form a disordered region. Positions 39–65 (DANDPVDDRHAPPGKRTVGDQMKKNQA) are enriched in basic and acidic residues. Residues 66-78 (ADDDDEDLNDTNY) show a composition bias toward acidic residues. Ser-143 bears the Phosphoserine mark. Residues Thr-180, Thr-266, and Thr-275 each carry the phosphothreonine modification. Ser-279 carries the post-translational modification Phosphoserine. 9 HAT repeats span residues 384 to 416 (TDIR…LEEP), 418 to 444 (DARI…ARLE), 445 to 476 (TYEN…LEEA), 554 to 586 (NALE…FGKN), 588 to 620 (GTRE…SKWL), 622 to 654 (GDVP…LESE), 689 to 721 (DNIR…IEEQ), 723 to 755 (EMME…LEEK), and 855 to 887 (RKIT…FELQ).

In terms of assembly, identified in the spliceosome B complex. Identified in the spliceosome C complex. Associates with the U5 snRNP particle. Component of the U4/U6-U5 tri-snRNP complex composed of the U4, U6 and U5 snRNAs and at least PRPF3, PRPF4, PRPF6, PRPF8, PRPF31, SNRNP200, TXNL4A, SNRNP40, DDX23, CD2BP2, PPIH, SNU13, EFTUD2, SART1 and USP39, LSm proteins LSm2-8 and Sm proteins. Interacts with ARAF1. Interacts with AR and NR3C1, but not ESR1, independently of the presence of hormones. Interacts with USH1G. Post-translationally, phosphorylated by PRP4K during spliceosome assembly.

The protein resides in the nucleus. It is found in the nucleoplasm. The protein localises to the nucleus speckle. Its function is as follows. Involved in pre-mRNA splicing as component of the U4/U6-U5 tri-snRNP complex, one of the building blocks of the spliceosome. Enhances dihydrotestosterone-induced transactivation activity of AR, as well as dexamethasone-induced transactivation activity of NR3C1, but does not affect estrogen-induced transactivation. This Pongo abelii (Sumatran orangutan) protein is Pre-mRNA-processing factor 6 (PRPF6).